A 268-amino-acid polypeptide reads, in one-letter code: Putative S-adenosyl-L-methionine-dependent methyltransferase MAP_0663 (268 aa).

S-adenosyl-L-methionine is bound by residues D124 and 153 to 154 (DL).

Belongs to the UPF0677 family.

Exhibits S-adenosyl-L-methionine-dependent methyltransferase activity. This Mycolicibacterium paratuberculosis (strain ATCC BAA-968 / K-10) (Mycobacterium paratuberculosis) protein is Putative S-adenosyl-L-methionine-dependent methyltransferase MAP_0663.